Consider the following 145-residue polypeptide: Secreted RxLR effector protein 100 (145 aa).

Positions 1–19 are cleaved as a signal peptide; it reads MRYLLLTFFTFHCQMVADA. Positions 27–30 match the RxLR motif; sequence RLLR. Positions 38 to 77 are disordered; it reads SGEGKIEEAGMIVTTGAPTPENETMEHNEVPQSTTDTDQK. N-linked (GlcNAc...) asparagine glycosylation occurs at Asn-59.

This sequence belongs to the RxLR effector family.

It is found in the secreted. The protein resides in the host nucleus. Functionally, secreted effector that dos not suppress the host cell death induced by cell death-inducing proteins. This is Secreted RxLR effector protein 100 from Plasmopara viticola (Downy mildew of grapevine).